The primary structure comprises 446 residues: ATP-dependent protease ATPase subunit HslU (446 aa).

Residues valine 18, 60–65 (GVGKTE), aspartate 259, glutamate 324, and arginine 396 each bind ATP.

The protein belongs to the ClpX chaperone family. HslU subfamily. In terms of assembly, a double ring-shaped homohexamer of HslV is capped on each side by a ring-shaped HslU homohexamer. The assembly of the HslU/HslV complex is dependent on binding of ATP.

Its subcellular location is the cytoplasm. ATPase subunit of a proteasome-like degradation complex; this subunit has chaperone activity. The binding of ATP and its subsequent hydrolysis by HslU are essential for unfolding of protein substrates subsequently hydrolyzed by HslV. HslU recognizes the N-terminal part of its protein substrates and unfolds these before they are guided to HslV for hydrolysis. The chain is ATP-dependent protease ATPase subunit HslU from Acidovorax sp. (strain JS42).